We begin with the raw amino-acid sequence, 565 residues long: Probable serine/threonine-protein kinase abkA (565 aa).

Positions 44 to 77 (NNNNISLKDKFKDLKDLKDNLNEKKINNDNDDDD) form a coiled coil. Residues 231–565 (LFQDDPIAAA…FKNIFYKNYK (335 aa)) enclose the Protein kinase domain. ATP-binding positions include 237–245 (IAAASIGQV) and Lys-259. Catalysis depends on Asp-401, which acts as the Proton acceptor.

It belongs to the protein kinase superfamily. ADCK protein kinase family.

The sequence is that of Probable serine/threonine-protein kinase abkA (abkA) from Dictyostelium discoideum (Social amoeba).